Reading from the N-terminus, the 1138-residue chain is Serine/threonine/tyrosine-interacting-like protein 2 (1138 aa).

The segment at 1 to 20 (MATGGDAEEEQVVPNEEDEA) is disordered. The region spanning 132–280 (NEVDEVWPNV…LRELNEKLME (149 aa)) is the Tyrosine-protein phosphatase domain. Position 291 is a phosphoserine (serine 291). Disordered stretches follow at residues 309–336 (EEED…VTLI), 348–473 (EWRK…TWDM), 486–515 (ARKY…DDEE), 552–575 (KKDS…GEKN), 592–618 (QKKV…AKKR), 660–694 (AAPS…LPNL), 761–800 (SGCL…VRGT), and 850–1117 (FKKK…DEAI). Residues 316–331 (SHLSGSSLGKASQVSK) are compositionally biased toward polar residues. Serine 373 is subject to Phosphoserine. Residues 376 to 385 (DGDDCEDEDV) show a composition bias toward acidic residues. Over residues 386 to 409 (ERIIQEWQSRNERYQAKGREQWNR) the composition is skewed to basic and acidic residues. Position 427 is a phosphothreonine (threonine 427). Serine 503 and serine 555 each carry phosphoserine. Composition is skewed to basic and acidic residues over residues 552 to 567 (KKDS…HGTE) and 595 to 614 (VGSE…DTVL). Polar residues predominate over residues 672–687 (SVLSTQSHRSHASNMP). The span at 773-788 (SSDVQSVLSSTSSLTS) shows a compositional bias: low complexity. Over residues 858-871 (DEDMSVGDRDEDTD) the composition is skewed to acidic residues. A Phosphoserine modification is found at serine 862. Positions 878–897 (RYSSRSNSQKPETDASSSLA) are enriched in polar residues. Phosphoserine is present on serine 929. Over residues 936–947 (SGSSRGRYTRSS) the composition is skewed to low complexity. Basic and acidic residues predominate over residues 965–977 (RSQEQDTSFHEAN). The residue at position 966 (serine 966) is a Phosphoserine. The segment covering 980–992 (TVRNTSRFSSSTT) has biased composition (polar residues). A Phosphoserine modification is found at serine 1016. Basic and acidic residues-rich tracts occupy residues 1035 to 1059 (PEPR…KSDF) and 1074 to 1091 (RSEE…EEGR). The span at 1095-1106 (GRQSQYRRSTNQ) shows a compositional bias: polar residues. A compositionally biased stretch (acidic residues) spans 1107–1116 (QEEEEMDDEA).

It belongs to the protein-tyrosine phosphatase family. Non-receptor class dual specificity subfamily.

Its subcellular location is the cytoplasm. It localises to the myofibril. The protein localises to the sarcomere. Functionally, may be required for myofiber maturation. In Mus musculus (Mouse), this protein is Serine/threonine/tyrosine-interacting-like protein 2 (Styxl2).